We begin with the raw amino-acid sequence, 222 residues long: Small ribosomal subunit protein uS3 (222 aa).

Positions 39-107 constitute a KH type-2 domain; sequence VREFLHKKLA…PVQINIEEVR (69 aa).

This sequence belongs to the universal ribosomal protein uS3 family. In terms of assembly, part of the 30S ribosomal subunit. Forms a tight complex with proteins S10 and S14.

Binds the lower part of the 30S subunit head. Binds mRNA in the 70S ribosome, positioning it for translation. The polypeptide is Small ribosomal subunit protein uS3 (Francisella tularensis subsp. tularensis (strain FSC 198)).